Consider the following 85-residue polypeptide: Toxin To9 (85 aa).

A signal peptide spans 1-19 (MNYSTLIAVASLLTAGTES). The 61-residue stretch at 21–81 (KDGYPVKEGD…AAIKGYGRCR (61 aa)) folds into the LCN-type CS-alpha/beta domain. 4 disulfides stabilise this stretch: cysteine 31–cysteine 80, cysteine 35–cysteine 56, cysteine 42–cysteine 63, and cysteine 46–cysteine 65. Proline 82 is subject to Proline amide.

This sequence belongs to the long (4 C-C) scorpion toxin superfamily. Sodium channel inhibitor family. Alpha subfamily. Expressed by the venom gland.

It localises to the secreted. Its function is as follows. Alpha toxins bind voltage-independently at site-3 of sodium channels (Nav) and inhibit the inactivation of the activated channels, thereby blocking neuronal transmission. The sequence is that of Toxin To9 from Tityus obscurus (Amazonian scorpion).